The chain runs to 600 residues: NADH-quinone oxidoreductase subunit C/D (600 aa).

The interval 1–190 (MVNNMTDLTA…DPFELTKAKQ (190 aa)) is NADH dehydrogenase I subunit C. Residues 214–600 (DFMFLNLGPN…IDFVMSDVDR (387 aa)) are NADH dehydrogenase I subunit D.

This sequence in the N-terminal section; belongs to the complex I 30 kDa subunit family. In the C-terminal section; belongs to the complex I 49 kDa subunit family. As to quaternary structure, NDH-1 is composed of 13 different subunits. Subunits NuoB, CD, E, F, and G constitute the peripheral sector of the complex.

It is found in the cell inner membrane. It carries out the reaction a quinone + NADH + 5 H(+)(in) = a quinol + NAD(+) + 4 H(+)(out). Functionally, NDH-1 shuttles electrons from NADH, via FMN and iron-sulfur (Fe-S) centers, to quinones in the respiratory chain. The immediate electron acceptor for the enzyme in this species is believed to be ubiquinone. Couples the redox reaction to proton translocation (for every two electrons transferred, four hydrogen ions are translocated across the cytoplasmic membrane), and thus conserves the redox energy in a proton gradient. The chain is NADH-quinone oxidoreductase subunit C/D from Salmonella paratyphi C (strain RKS4594).